The sequence spans 386 residues: Flap endonuclease 1 (386 aa).

The tract at residues 1 to 104 (MGILGLSKLI…GELAKRAERR (104 aa)) is N-domain. Residue D34 participates in Mg(2+) binding. 2 residues coordinate DNA: R47 and R70. D86, E158, E160, D179, and D181 together coordinate Mg(2+). The I-domain stretch occupies residues 122–253 (EIEKFNRRLV…KRAIELINNY (132 aa)). A DNA-binding site is contributed by E158. DNA is bound by residues G231 and D233. D233 contributes to the Mg(2+) binding site. Positions 336–344 (TQVRLDSFF) are interaction with PCNA. The segment at 351 to 386 (PNAVHAAKRKAEEAKKSANNKKAKTSGGAARGRRPK) is disordered.

It belongs to the XPG/RAD2 endonuclease family. FEN1 subfamily. Interacts with PCNA. Three molecules of FEN1 bind to one PCNA trimer with each molecule binding to one PCNA monomer. PCNA stimulates the nuclease activity without altering cleavage specificity. Mg(2+) is required as a cofactor. Phosphorylated. Phosphorylation upon DNA damage induces relocalization to the nuclear plasma.

The protein localises to the nucleus. The protein resides in the nucleolus. It is found in the nucleoplasm. Its subcellular location is the mitochondrion. Structure-specific nuclease with 5'-flap endonuclease and 5'-3' exonuclease activities involved in DNA replication and repair. During DNA replication, cleaves the 5'-overhanging flap structure that is generated by displacement synthesis when DNA polymerase encounters the 5'-end of a downstream Okazaki fragment. It enters the flap from the 5'-end and then tracks to cleave the flap base, leaving a nick for ligation. Also involved in the long patch base excision repair (LP-BER) pathway, by cleaving within the apurinic/apyrimidinic (AP) site-terminated flap. Acts as a genome stabilization factor that prevents flaps from equilibrating into structures that lead to duplications and deletions. Also possesses 5'-3' exonuclease activity on nicked or gapped double-stranded DNA, and exhibits RNase H activity. Also involved in replication and repair of rDNA and in repairing mitochondrial DNA. This Drosophila persimilis (Fruit fly) protein is Flap endonuclease 1.